An 88-amino-acid polypeptide reads, in one-letter code: NADH-ubiquinone oxidoreductase chain 4L (88 aa).

Helical transmembrane passes span 1-21 (MNLSLLLFLIGILGFILNRKN), 22-42 (IILMIIAIEIMLLAITLLVLM), and 55-75 (FSIYIISIAGAESVIGLSILV).

It belongs to the complex I subunit 4L family.

It localises to the mitochondrion membrane. The enzyme catalyses a ubiquinone + NADH + 5 H(+)(in) = a ubiquinol + NAD(+) + 4 H(+)(out). In terms of biological role, core subunit of the mitochondrial membrane respiratory chain NADH dehydrogenase (Complex I) that is believed to belong to the minimal assembly required for catalysis. Complex I functions in the transfer of electrons from NADH to the respiratory chain. The immediate electron acceptor for the enzyme is believed to be ubiquinone. The sequence is that of NADH-ubiquinone oxidoreductase chain 4L (ND4L) from Schizophyllum commune (Split gill fungus).